We begin with the raw amino-acid sequence, 181 residues long: Translation initiation factor IF-3 (181 aa).

Belongs to the IF-3 family. In terms of assembly, monomer.

The protein localises to the cytoplasm. In terms of biological role, IF-3 binds to the 30S ribosomal subunit and shifts the equilibrium between 70S ribosomes and their 50S and 30S subunits in favor of the free subunits, thus enhancing the availability of 30S subunits on which protein synthesis initiation begins. The polypeptide is Translation initiation factor IF-3 (Azotobacter vinelandii).